The sequence spans 136 residues: Cell division protein SepF 3 (136 aa).

Belongs to the SepF family. As to quaternary structure, homodimer. Interacts with FtsZ.

It is found in the cytoplasm. Its function is as follows. Cell division protein that is part of the divisome complex and is recruited early to the Z-ring. Probably stimulates Z-ring formation, perhaps through the cross-linking of FtsZ protofilaments. Its function overlaps with FtsA. In Streptomyces coelicolor (strain ATCC BAA-471 / A3(2) / M145), this protein is Cell division protein SepF 3.